We begin with the raw amino-acid sequence, 55 residues long: Large ribosomal subunit protein bL33 (55 aa).

It belongs to the bacterial ribosomal protein bL33 family.

In Yersinia enterocolitica serotype O:8 / biotype 1B (strain NCTC 13174 / 8081), this protein is Large ribosomal subunit protein bL33.